Consider the following 1025-residue polypeptide: Probable beta-galactosidase B (1025 aa).

The signal sequence occupies residues 1-21; the sequence is MATAFWLLLFLLGSLHVLTAA. N23 carries an N-linked (GlcNAc...) asparagine glycan. Y90 contributes to the substrate binding site. N100 carries an N-linked (GlcNAc...) asparagine glycan. Substrate-binding residues include N135, A136, E137, and N195. E196 serves as the catalytic Proton donor. The N-linked (GlcNAc...) asparagine glycan is linked to N211. Residue Y265 participates in substrate binding. A disulfide bridge links C271 with C324. Residue E308 is the Nucleophile of the active site. Y373 lines the substrate pocket. N-linked (GlcNAc...) asparagine glycosylation is found at N411, N456, N736, N776, N884, N925, and N926.

It belongs to the glycosyl hydrolase 35 family.

Its subcellular location is the secreted. It carries out the reaction Hydrolysis of terminal non-reducing beta-D-galactose residues in beta-D-galactosides.. In terms of biological role, cleaves beta-linked terminal galactosyl residues from gangliosides, glycoproteins, and glycosaminoglycans. This is Probable beta-galactosidase B (lacB) from Emericella nidulans (strain FGSC A4 / ATCC 38163 / CBS 112.46 / NRRL 194 / M139) (Aspergillus nidulans).